Consider the following 323-residue polypeptide: Cytochrome c biogenesis protein CcsA (323 aa).

Transmembrane regions (helical) follow at residues 18-38, 43-63, 71-91, 99-119, 146-166, 227-247, 256-276, and 288-308; these read VSVV…VGLY, KGML…WVYW, LYES…IPSF, LNVI…SGLL, LGYA…IIIF, VISL…VWAN, WDPK…YLHI, and AIVA…VNLL.

This sequence belongs to the CcmF/CycK/Ccl1/NrfE/CcsA family. As to quaternary structure, may interact with Ccs1.

It is found in the plastid. It localises to the chloroplast thylakoid membrane. Functionally, required during biogenesis of c-type cytochromes (cytochrome c6 and cytochrome f) at the step of heme attachment. In Spinacia oleracea (Spinach), this protein is Cytochrome c biogenesis protein CcsA.